We begin with the raw amino-acid sequence, 145 residues long: Photosystem I reaction center subunit XI (145 aa).

3 helical membrane-spanning segments follow: residues 48–68 (LEIG…LGPL), 75–95 (LLVG…GLTI), and 125–145 (IGAF…SFFA).

Belongs to the PsaL family.

Its subcellular location is the plastid. It is found in the chloroplast thylakoid membrane. The chain is Photosystem I reaction center subunit XI from Emiliania huxleyi (Coccolithophore).